We begin with the raw amino-acid sequence, 618 residues long: Polyamine transporter TPO5 (618 aa).

Over 1–60 (MPEYTLLADNIRENIVHFDPNGLFDNLHTIVHEDDSQENEEAEHFNYDQVLDKSLLSRGS) the chain is Cytoplasmic. Residues 61–84 (IVGLGLGLMSPVLGMCTSMAIGLI) form a helical membrane-spanning segment. Over 85–90 (NGGPLT) the chain is Extracellular. A helical transmembrane segment spans residues 91-110 (IMLGFLISGVCIWFSSLSLG). Over 111–131 (EIVSKFPMELHVGSAMLAPEK) the chain is Cytoplasmic. A helical transmembrane segment spans residues 132-148 (LKLVCSWYTGWLMLIGN). Residues 149 to 154 (WTMSTS) are Extracellular-facing. The chain crosses the membrane as a helical span at residues 155–171 (ITFAGAQLTISLILMTN). Over 172 to 179 (SNLISEAH) the chain is Cytoplasmic. A helical membrane pass occupies residues 180 to 200 (LIFYTVIVFYLVVTVVGLVNL). Topologically, residues 201 to 211 (KFARFIETINK) are extracellular. Residues 212–231 (VCVYWIIYAIIFIDILLLVF) traverse the membrane as a helical segment. Residues 232–297 (HKGKFRSLKY…EKDIPRGMSN (66 aa)) lie on the Cytoplasmic side of the membrane. A helical transmembrane segment spans residues 298–317 (AVLLSAFSGVIFLIPIMLIL). Over 318-342 (PDNDLLFTNHKVLPIVNIFTKSTDS) the chain is Extracellular. The helical transmembrane segment at 343–367 (VVLSFFLVLLILGNLLFSGIGSITT) threads the bilayer. Topologically, residues 368–402 (SSRAVYSFSRDQAIPYYDKWTYVEPDSQSKVPKNS) are cytoplasmic. The helical transmembrane segment at 403–419 (VVLSMIISYFLGLLALI) threads the bilayer. The Extracellular segment spans residues 420–425 (STAAFN). Residues 426–449 (AFIGAAVLCLCSATFIPLVLVLFT) form a helical membrane-spanning segment. Residues 450–464 (RRRAIRSAPVKIRYK) lie on the Cytoplasmic side of the membrane. A helical transmembrane segment spans residues 465–486 (FGWFINIVSIVWLLLSMVSVCL). Topologically, residues 487-498 (PTQVPVTFKTMN) are extracellular. A helical membrane pass occupies residues 499–516 (YALMVYVFCILVITGLYF). At 517-618 (KWGKYNFRLP…DLADDRRYDI (102 aa)) the chain is on the cytoplasmic side. S569 is modified (phosphoserine). Positions 576 to 618 (VHPKSSTENPFEENEENVITDYGDEHHTAEQEFDLADDRRYDI) are disordered. Positions 598 to 618 (GDEHHTAEQEFDLADDRRYDI) are enriched in basic and acidic residues.

It belongs to the amino acid-polyamine-organocation (APC) superfamily.

Its subcellular location is the golgi apparatus membrane. In terms of biological role, required for polyamine transport. Transports putrescine effectively and spermidine less effectively. This Saccharomyces cerevisiae (strain ATCC 204508 / S288c) (Baker's yeast) protein is Polyamine transporter TPO5 (TPO5).